The sequence spans 455 residues: Bifunctional protein GlmU (455 aa).

The interval 1 to 228 is pyrophosphorylase; sequence MNNTLTTIIL…EFEIEGVNNR (228 aa). UDP-N-acetyl-alpha-D-glucosamine-binding positions include 10 to 13, Lys-24, Gln-75, 80 to 81, 102 to 104, Gly-138, Glu-153, Asn-168, and Asn-226; these read LAAG, GT, and YGD. Asp-104 contributes to the Mg(2+) binding site. Mg(2+) is bound at residue Asn-226. The interval 229-249 is linker; sequence QQLAQLERKWQAKLVEDLQVQ. The tract at residues 250–455 is N-acetyltransferase; sequence GVQFADPNRV…DNYQRPEKKK (206 aa). UDP-N-acetyl-alpha-D-glucosamine is bound by residues Arg-332 and Lys-350. His-362 (proton acceptor) is an active-site residue. 2 residues coordinate UDP-N-acetyl-alpha-D-glucosamine: Tyr-365 and Asn-376. Acetyl-CoA is bound by residues Ala-379, 385-386, Ala-422, and Arg-439; that span reads NY.

This sequence in the N-terminal section; belongs to the N-acetylglucosamine-1-phosphate uridyltransferase family. The protein in the C-terminal section; belongs to the transferase hexapeptide repeat family. As to quaternary structure, homotrimer. The cofactor is Mg(2+).

The protein localises to the cytoplasm. The enzyme catalyses alpha-D-glucosamine 1-phosphate + acetyl-CoA = N-acetyl-alpha-D-glucosamine 1-phosphate + CoA + H(+). It catalyses the reaction N-acetyl-alpha-D-glucosamine 1-phosphate + UTP + H(+) = UDP-N-acetyl-alpha-D-glucosamine + diphosphate. It participates in nucleotide-sugar biosynthesis; UDP-N-acetyl-alpha-D-glucosamine biosynthesis; N-acetyl-alpha-D-glucosamine 1-phosphate from alpha-D-glucosamine 6-phosphate (route II): step 2/2. Its pathway is nucleotide-sugar biosynthesis; UDP-N-acetyl-alpha-D-glucosamine biosynthesis; UDP-N-acetyl-alpha-D-glucosamine from N-acetyl-alpha-D-glucosamine 1-phosphate: step 1/1. It functions in the pathway bacterial outer membrane biogenesis; LPS lipid A biosynthesis. Catalyzes the last two sequential reactions in the de novo biosynthetic pathway for UDP-N-acetylglucosamine (UDP-GlcNAc). The C-terminal domain catalyzes the transfer of acetyl group from acetyl coenzyme A to glucosamine-1-phosphate (GlcN-1-P) to produce N-acetylglucosamine-1-phosphate (GlcNAc-1-P), which is converted into UDP-GlcNAc by the transfer of uridine 5-monophosphate (from uridine 5-triphosphate), a reaction catalyzed by the N-terminal domain. In Psychrobacter sp. (strain PRwf-1), this protein is Bifunctional protein GlmU.